A 1089-amino-acid chain; its full sequence is Nonsense-mediated mRNA decay protein 2 (1089 aa).

The disordered stretch occupies residues 819–951 (DRVKGSSASI…DLDADRDIEM (133 aa)). Composition is skewed to acidic residues over residues 841–866 (ITED…EDAE) and 885–943 (ESED…GGDL).

Its subcellular location is the cytoplasm. Involved in nonsense-mediated decay of mRNAs containing premature stop codons. It interacts, via its C-terminus, with NAM7/UPF1. Could be involved in determining the efficiency of translational termination or reinitiation or factors involved in the initial assembly of an initiation- and termination-competent mRNP. This Saccharomyces cerevisiae (strain ATCC 204508 / S288c) (Baker's yeast) protein is Nonsense-mediated mRNA decay protein 2 (NMD2).